The chain runs to 508 residues: Photosystem II CP47 reaction center protein (508 aa).

Helical transmembrane passes span 21–36 (SVHI…WAGS), 101–115 (IVFS…IWHW), 140–156 (GIHL…FGVF), 203–218 (IAAG…FHLS), 237–252 (VLSS…AFVV), and 457–472 (SFAL…HGAR).

The protein belongs to the PsbB/PsbC family. PsbB subfamily. In terms of assembly, PSII is composed of 1 copy each of membrane proteins PsbA, PsbB, PsbC, PsbD, PsbE, PsbF, PsbH, PsbI, PsbJ, PsbK, PsbL, PsbM, PsbT, PsbX, PsbY, PsbZ, Psb30/Ycf12, at least 3 peripheral proteins of the oxygen-evolving complex and a large number of cofactors. It forms dimeric complexes. It depends on Binds multiple chlorophylls. PSII binds additional chlorophylls, carotenoids and specific lipids. as a cofactor.

It is found in the plastid. It localises to the chloroplast thylakoid membrane. Functionally, one of the components of the core complex of photosystem II (PSII). It binds chlorophyll and helps catalyze the primary light-induced photochemical processes of PSII. PSII is a light-driven water:plastoquinone oxidoreductase, using light energy to abstract electrons from H(2)O, generating O(2) and a proton gradient subsequently used for ATP formation. The sequence is that of Photosystem II CP47 reaction center protein from Jasminum nudiflorum (Winter jasmine).